The sequence spans 182 residues: Large ribosomal subunit protein uL5 (182 aa).

This sequence belongs to the universal ribosomal protein uL5 family. In terms of assembly, part of the 50S ribosomal subunit; part of the 5S rRNA/L5/L18/L25 subcomplex. Contacts the 5S rRNA and the P site tRNA. Forms a bridge to the 30S subunit in the 70S ribosome.

Functionally, this is one of the proteins that bind and probably mediate the attachment of the 5S RNA into the large ribosomal subunit, where it forms part of the central protuberance. In the 70S ribosome it contacts protein S13 of the 30S subunit (bridge B1b), connecting the 2 subunits; this bridge is implicated in subunit movement. Contacts the P site tRNA; the 5S rRNA and some of its associated proteins might help stabilize positioning of ribosome-bound tRNAs. The chain is Large ribosomal subunit protein uL5 from Coxiella burnetii (strain CbuG_Q212) (Coxiella burnetii (strain Q212)).